Here is a 245-residue protein sequence, read N- to C-terminus: DNA polymerase sliding clamp (245 aa).

It belongs to the PCNA family. In terms of assembly, homotrimer. The subunits circularize to form a toroid; DNA passes through its center. Replication factor C (RFC) is required to load the toroid on the DNA.

Sliding clamp subunit that acts as a moving platform for DNA processing. Responsible for tethering the catalytic subunit of DNA polymerase and other proteins to DNA during high-speed replication. The polypeptide is DNA polymerase sliding clamp (Methanosarcina acetivorans (strain ATCC 35395 / DSM 2834 / JCM 12185 / C2A)).